A 56-amino-acid chain; its full sequence is MAVQKSKVTRSRRGQRRSHDALTAAATTVDVTSGETHLRHNVTADGYYKGVKVINK.

The interval 1 to 26 (MAVQKSKVTRSRRGQRRSHDALTAAA) is disordered. A compositionally biased stretch (basic residues) spans 7 to 16 (KVTRSRRGQR).

The protein belongs to the bacterial ribosomal protein bL32 family.

This is Large ribosomal subunit protein bL32 (rpmF) from Moritella marina (Vibrio marinus).